The primary structure comprises 195 residues: Phosphoheptose isomerase (195 aa).

The region spanning Leu-35–Asn-195 is the SIS domain. Substrate is bound at residue Asn-51–Gly-53. Zn(2+) is bound by residues His-60 and Glu-64. Residues Glu-64, Asn-93–Asp-94, Ser-119–Ser-121, Ser-124, and Gln-171 contribute to the substrate site. Zn(2+)-binding residues include Gln-171 and His-179.

The protein belongs to the SIS family. GmhA subfamily. In terms of assembly, homotetramer. Zn(2+) serves as cofactor.

The protein resides in the cytoplasm. The enzyme catalyses 2 D-sedoheptulose 7-phosphate = D-glycero-alpha-D-manno-heptose 7-phosphate + D-glycero-beta-D-manno-heptose 7-phosphate. It participates in carbohydrate biosynthesis; D-glycero-D-manno-heptose 7-phosphate biosynthesis; D-glycero-alpha-D-manno-heptose 7-phosphate and D-glycero-beta-D-manno-heptose 7-phosphate from sedoheptulose 7-phosphate: step 1/1. In terms of biological role, catalyzes the isomerization of sedoheptulose 7-phosphate in D-glycero-D-manno-heptose 7-phosphate. This chain is Phosphoheptose isomerase, found in Sulfurimonas denitrificans (strain ATCC 33889 / DSM 1251) (Thiomicrospira denitrificans (strain ATCC 33889 / DSM 1251)).